Consider the following 451-residue polypeptide: Tubulin gamma-1 chain (451 aa).

Residue S131 is modified to Phosphoserine; by BRSK1. A142 to G148 is a GTP binding site.

This sequence belongs to the tubulin family. As to quaternary structure, component of the gamma-tubulin ring complex (gTuRC) consisting of TUBGCP2, TUBGCP3, TUBGCP4, TUBGCP5 and TUBGCP6 and gamma-tubulin TUBG1 or TUBG2. TUBGCP2, TUBGCP3, TUBGCP4, TUBGCP5 and TUBGCP6 assemble in a 5:5:2:1:1 stoichiometry; each is associated with a gamma-tubulin, thereby arranging 14 gamma-tubulins in a helical manner. Gamma-tubulin at the first position is blocked by TUBGCP3 at the last position, allowing 13 protafilaments to grow into a microtubule. The gTuRC (via TUBGCP3 and TUBGCP6) interacts with ACTB and MZT1; the interactions form a luminal bridge that stabilizes the initial structure during complex assembly. The gTuRC (via TUBGCP2) interacts with MZT2A/MZT2B and CDK5RAP2 (via CM1 motif); the interactions play a role in gTuRC activation. Interacts with alpha-beta tubulin heterodimers; the interaction allows microtubules to nucleate from the gTuRC. Interacts with B9D2. Interacts with CDK5RAP2; the interaction is leading to centrosomal localization of TUBG1 and CDK5RAP2. Interacts with CIMAP3. Interacts with SAS6 and NUP62 at the centrosome. Interacts with EML3 (phosphorylated at 'Thr-881') and HAUS8. Interacts with DNM2; this interaction may participate in centrosome cohesion. Interacts with CCDC66. Post-translationally, phosphorylation at Ser-131 by BRSK1 regulates centrosome duplication, possibly by mediating relocation of gamma-tubulin and its associated proteins from the cytoplasm to the centrosome.

It localises to the cytoplasm. The protein localises to the cytoskeleton. The protein resides in the microtubule organizing center. Its subcellular location is the centrosome. It is found in the spindle. Its function is as follows. Tubulin is the major constituent of microtubules, protein filaments consisting of alpha- and beta-tubulin heterodimers. Gamma-tubulin is a key component of the gamma-tubulin ring complex (gTuRC) which mediates microtubule nucleation. The gTuRC regulates the minus-end nucleation of alpha-beta tubulin heterodimers that grow into microtubule protafilaments, a critical step in centrosome duplication and spindle formation. This chain is Tubulin gamma-1 chain, found in Bos taurus (Bovine).